The following is a 519-amino-acid chain: O-fucosyltransferase 31 (519 aa).

The helical; Signal-anchor for type II membrane protein transmembrane segment at 18-38 (ALAGVFVLLFPILYPNLFSPL) threads the bilayer. Asn-131 is a glycosylation site (N-linked (GlcNAc...) asparagine). Position 302–304 (302–304 (HLR)) interacts with substrate. 2 N-linked (GlcNAc...) asparagine glycosylation sites follow: Asn-373 and Asn-474.

It belongs to the glycosyltransferase GT106 family.

The protein localises to the membrane. It functions in the pathway glycan metabolism. This chain is O-fucosyltransferase 31, found in Arabidopsis thaliana (Mouse-ear cress).